The primary structure comprises 483 residues: Regulatory protein ViaA (483 aa).

This sequence belongs to the ViaA family. In terms of assembly, homodimer. Interacts with RavA.

Its subcellular location is the cytoplasm. Functionally, component of the RavA-ViaA chaperone complex, which may act on the membrane to optimize the function of some of the respiratory chains. ViaA stimulates the ATPase activity of RavA. The protein is Regulatory protein ViaA of Salmonella choleraesuis (strain SC-B67).